Consider the following 312-residue polypeptide: Zygote arrest protein 1.L (312 aa).

Disordered regions lie at residues 79–133 (RDVG…VRFP) and 150–205 (FQDK…DQTR). 2 stretches are compositionally biased toward polar residues: residues 86–95 (NPRQDASVQC) and 113–128 (PQQSPPEQGSPASPTK). The segment covering 152–196 (DKGENLSEKTEALRSEGSRGEGGRPEGKQEDGEIKEQTKMDKADQ) has biased composition (basic and acidic residues). The segment at 214-297 (KYGYYHCKDC…RQDLCGRCKG (84 aa)) adopts a 3CxxC-type zinc-finger fold.

The protein belongs to the ZAR1 family. In terms of tissue distribution, ovary.

The protein localises to the cytoplasm. Its subcellular location is the cytoplasmic ribonucleoprotein granule. In terms of biological role, mRNA-binding protein required for maternal mRNA storage, translation and degradation during oocyte maturation. Probably promotes formation of some phase-separated membraneless compartment that stores maternal mRNAs in oocytes: acts by undergoing liquid-liquid phase separation upon binding to maternal mRNAs. Binds to the 3'-UTR of maternal mRNAs in immature oocytes, inhibiting their translation. This Xenopus laevis (African clawed frog) protein is Zygote arrest protein 1.L.